The primary structure comprises 562 residues: Isochorismate synthase 2, chloroplastic (562 aa).

The transit peptide at 1–55 (MASLQCSFHFLGTNPKKYNPSSIFQSYSRTSFTKLSSRVSRQRFLRCTLSMNGCE) directs the protein to the chloroplast.

The protein belongs to the isochorismate synthase family. Requires Mg(2+) as cofactor.

It is found in the plastid. Its subcellular location is the chloroplast. It catalyses the reaction chorismate = isochorismate. The protein operates within siderophore biosynthesis; salicylate biosynthesis. Functionally, isochorismate synthase involved in the synthesis of salicylic acid (SA) required for both local and systemic acquired resistance (LAR and SAR) while SA synthesized through the phenylalanine ammonium lyase (PAL) pathway seems to potentiate plant cell death. Also involved in phylloquinone (vitamin K1) synthesis. Has no isochorismate pyruvate lyase (IPL) activity. The protein is Isochorismate synthase 2, chloroplastic (ICS2) of Arabidopsis thaliana (Mouse-ear cress).